We begin with the raw amino-acid sequence, 294 residues long: Nucleophosmin (294 aa).

The span at 121-133 (LEEEPESEDEEED) shows a compositional bias: acidic residues. The tract at residues 121–244 (LEEEPESEDE…PKTPKVPLSL (124 aa)) is disordered. Residues 153–158 (PQKKPK) carry the Nuclear localization signal motif. A compositionally biased stretch (acidic residues) spans 161–186 (EDDEDDDEDEDDDEDDEDDLDDDEEE). A Nuclear localization signal motif is present at residues 190–196 (PMKKPAR). The segment covering 223–233 (KTPDSKKDKSL) has biased composition (basic and acidic residues).

This sequence belongs to the nucleoplasmin family. Decamer formed by two pentameric rings associated in a head-to-head fashion. Phosphorylated.

It localises to the cytoplasm. It is found in the nucleus. The protein localises to the nucleoplasm. The protein resides in the nucleolus. Acts as a chaperonin for the core histones H3, H2B and H4. Associated with nucleolar ribonucleoprotein structures and bind single-stranded nucleic acids. It may function in the assembly and/or transport of ribosome. May stimulate endonuclease activity on apurinic/apyrimidinic (AP) double-stranded DNA. May inhibit endonuclease activity on AP single-stranded RNA. This Gallus gallus (Chicken) protein is Nucleophosmin (NPM1).